Consider the following 49-residue polypeptide: uncharacterized protein (49 aa).

A helical transmembrane segment spans residues 20–42 (LFLVGLTIGKMATSRILSFLGFI).

It localises to the membrane. This is an uncharacterized protein from Dictyostelium discoideum (Social amoeba).